The chain runs to 400 residues: Large envelope protein (400 aa).

At methionine 1 the chain carries N-acetylmethionine. Disordered stretches follow at residues 1–20 (MGGW…SVPN) and 89–115 (STIP…LRDS). Residue glycine 2 is the site of N-myristoyl glycine; by host attachment. Residues 2–119 (GGWSSKPRKG…PPLRDSHPQA (118 aa)) are pre-S1. Residues 2–174 (GGWSSKPRKG…SARTGDPVTN (173 aa)) form a pre-S region. The Virion surface; in external conformation segment spans residues 2-181 (GGWSSKPRKG…VTNMENITSG (180 aa)). The Intravirion; in internal conformation portion of the chain corresponds to 2-253 (GGWSSKPRKG…PGYRWMCLRR (252 aa)). A glycan (N-linked (GlcNAc...) asparagine) is linked at tryptophan 4. A compositionally biased stretch (polar residues) spans 89–106 (STIPPPASTNRQSGRQPT). The tract at residues 120-174 (MQWNSTAFHQTLQDPRVRGLYLPAGGSSSGTVNPAPNIASHISSISARTGDPVTN) is pre-S2. Residues 182-202 (FLGPLLVLQAGFFLLTRILTI) traverse the membrane as a helical segment. Topologically, residues 203–253 (PQSLDSWWTSLNFLGGSPVCLGQNSQSPTSNHSPTSCPPICPGYRWMCLRR) are intravirion; in external conformation. The chain crosses the membrane as a helical span at residues 254 to 274 (FIIFLFILLLCLIFLLVLLDY). Topologically, residues 275 to 348 (QGMLPVCPLI…WASVRFSWLS (74 aa)) are virion surface. Residue asparagine 320 is glycosylated (N-linked (GlcNAc...) asparagine; by host; partial). The helical transmembrane segment at 349–369 (LLVPFVQWFVGLSPTVWLSAI) threads the bilayer. At 370-375 (WMMWYW) the chain is on the intravirion side. A helical membrane pass occupies residues 376-398 (GPSLYSIVSPFIPLLPIFFCLWV). At 399–400 (YI) the chain is on the virion surface side.

The protein belongs to the orthohepadnavirus major surface antigen family. In its internal form (Li-HBsAg), interacts with the capsid protein and with the isoform S. Interacts with host chaperone CANX. As to quaternary structure, associates with host chaperone CANX through its pre-S2 N glycan; this association may be essential for isoform M proper secretion. In terms of assembly, interacts with isoform L. Interacts with the antigens of satellite virus HDV (HDVAgs); this interaction is required for encapsidation of HDV genomic RNA. In terms of processing, isoform M is N-terminally acetylated by host at a ratio of 90%, and N-glycosylated by host at the pre-S2 region. Post-translationally, myristoylated.

Its subcellular location is the virion membrane. Its function is as follows. The large envelope protein exists in two topological conformations, one which is termed 'external' or Le-HBsAg and the other 'internal' or Li-HBsAg. In its external conformation the protein attaches the virus to cell receptors and thereby initiating infection. This interaction determines the species specificity and liver tropism. This attachment induces virion internalization predominantly through caveolin-mediated endocytosis. The large envelope protein also assures fusion between virion membrane and endosomal membrane. In its internal conformation the protein plays a role in virion morphogenesis and mediates the contact with the nucleocapsid like a matrix protein. The middle envelope protein plays an important role in the budding of the virion. It is involved in the induction of budding in a nucleocapsid independent way. In this process the majority of envelope proteins bud to form subviral lipoprotein particles of 22 nm of diameter that do not contain a nucleocapsid. This is Large envelope protein from Hepatitis B virus genotype A2 subtype adw2 (strain Rutter 1979) (HBV-A).